A 317-amino-acid chain; its full sequence is Adenine deaminase (317 aa).

Residues H14, H16, and H194 each coordinate Zn(2+). The active-site Proton donor is the E197. Residue D275 coordinates Zn(2+). D276 is a substrate binding site.

Belongs to the metallo-dependent hydrolases superfamily. Adenosine and AMP deaminases family. Adenine deaminase type 2 subfamily. The cofactor is Zn(2+).

The enzyme catalyses adenine + H2O + H(+) = hypoxanthine + NH4(+). Its function is as follows. Catalyzes the hydrolytic deamination of adenine to hypoxanthine. Plays an important role in the purine salvage pathway and in nitrogen catabolism. In Pseudomonas savastanoi pv. phaseolicola (strain 1448A / Race 6) (Pseudomonas syringae pv. phaseolicola (strain 1448A / Race 6)), this protein is Adenine deaminase.